Consider the following 197-residue polypeptide: Rac-like GTP-binding protein ARAC1 (197 aa).

13–20 (GDGAVGKT) contributes to the GTP binding site. Residues 35–43 (YVPTVFDNF) carry the Effector region motif. GTP-binding positions include 60–64 (DTAGQ) and 118–121 (TKLD). Cysteine 194 carries the post-translational modification Cysteine methyl ester. A lipid anchor (S-geranylgeranyl cysteine) is attached at cysteine 194. Residues 195–197 (SIL) constitute a propeptide, removed in mature form.

Belongs to the small GTPase superfamily. Rho family. Interacts with SPK1. In terms of tissue distribution, ubiquitous.

It localises to the cytoplasm. It is found in the membrane. In terms of biological role, inactive GDP-bound Rho GTPases reside in the cytosol, are found in a complex with Rho GDP-dissociation inhibitors (Rho GDIs), and are released from the GDI protein in order to translocate to membranes upon activation. The protein is Rac-like GTP-binding protein ARAC1 (ARAC1) of Arabidopsis thaliana (Mouse-ear cress).